The sequence spans 194 residues: CDRRFSRSDELTRHIRIHTGQKPFQCRICMRNFSRSDHLTTHIRTHTGEKPFACDICGRKFARSDERKRHTKIHLRQKDKKVEKAASVSATSSSVAAYSSSVATSYSSSIATTYPSSVRTVYSSPASSSYPSPAHTTFPSPSIATTYSSGTATFQTQVATSFPSPGVTNNFSSQVTSALSDMTSTFSPRTIEIC.

C2H2-type zinc fingers lie at residues 1-18, 24-46, and 52-74; these read CDRRFSRSDELTRHIRIH, FQCRICMRNFSRSDHLTTHIRTH, and FACDICGRKFARSDERKRHTKIH.

Belongs to the EGR C2H2-type zinc-finger protein family.

The protein localises to the nucleus. Its subcellular location is the cytoplasm. Its function is as follows. Transcriptional regulator. Recognizes and binds to the DNA sequence 5'-GCG(T/G)GGGCG-3'(EGR-site) in the promoter region of target genes. Binds double-stranded target DNA, irrespective of the cytosine methylation status. Regulates the transcription of numerous target genes, and thereby plays an important role in regulating the response to growth factors, DNA damage, and ischemia. Plays a role in the regulation of cell survival, proliferation and cell death. Mediates responses to ischemia and hypoxia; regulates the expression of proteins that are involved in inflammatory processes. Plays a role in regulating the expression of circadian clock genes. The protein is Early growth response protein 1 (EGR1) of Gallus gallus (Chicken).